We begin with the raw amino-acid sequence, 446 residues long: WD repeat domain phosphoinositide-interacting protein 1 (446 aa).

WD repeat units follow at residues 3–42, 47–88, 92–126, 131–173, 177–216, 222–261, and 304–343; these read AEAA…LFSL, QLDQ…VYHF, TEIC…IHNI, LLKT…LYDG, KTVC…VFSV, LYEF…IFKL, and FATA…MYNL. The Nuclear receptor interaction motif lies at 131-136; the sequence is LLKTLL. The L/FRRG motif signature appears at 225-228; sequence FRRG. Positions 386–406 are disordered; the sequence is ARPSASSASTVPGYSEDGGAL.

It belongs to the WD repeat PROPPIN family. As to quaternary structure, interacts with androgen receptor (AR) and the estrogen receptors ESR1 and ESR2. Interacts with WIPI2. Interacts with WDR45. Interacts with ATG16L1. May interact with NUDC. In terms of tissue distribution, ubiquitously expressed. Highly expressed in skeletal muscle, heart, testis, pancreas and placenta. Highly expressed in G361, Sk-mel-28, Sk-mel-13, WM852 and WM451 cells. Up-regulated in a variety of tumor tissues.

The protein resides in the golgi apparatus. Its subcellular location is the trans-Golgi network. The protein localises to the endosome. It localises to the cytoplasmic vesicle. It is found in the clathrin-coated vesicle. The protein resides in the preautophagosomal structure membrane. Its subcellular location is the cytoplasm. The protein localises to the cytoskeleton. In terms of biological role, component of the autophagy machinery that controls the major intracellular degradation process by which cytoplasmic materials are packaged into autophagosomes and delivered to lysosomes for degradation. Plays an important role in starvation- and calcium-mediated autophagy, as well as in mitophagy. Functions downstream of the ULK1 and PI3-kinases that produce phosphatidylinositol 3-phosphate (PtdIns3P) on membranes of the endoplasmic reticulum once activated. Binds phosphatidylinositol 3-phosphate (PtdIns3P), and maybe other phosphoinositides including PtdIns3,5P2 and PtdIns5P, and is recruited to phagophore assembly sites at the endoplasmic reticulum membranes. There, it assists WIPI2 in the recruitment of ATG12-ATG5-ATG16L1, a complex that directly controls the elongation of the nascent autophagosomal membrane. Together with WDR45/WIPI4, promotes ATG2 (ATG2A or ATG2B)-mediated lipid transfer by enhancing ATG2-association with phosphatidylinositol 3-monophosphate (PI3P)-containing membranes. Involved in xenophagy of Staphylococcus aureus. Invading S.aureus cells become entrapped in autophagosome-like WIPI1 positive vesicles targeted for lysosomal degradation. Also plays a distinct role in controlling the transcription of melanogenic enzymes and melanosome maturation, a process that is distinct from starvation-induced autophagy. May also regulate the trafficking of proteins involved in the mannose-6-phosphate receptor (MPR) recycling pathway. The chain is WD repeat domain phosphoinositide-interacting protein 1 (WIPI1) from Homo sapiens (Human).